The chain runs to 278 residues: 4-deoxy-L-threo-5-hexosulose-uronate ketol-isomerase (278 aa).

Zn(2+) contacts are provided by His196, His198, Glu203, and His245.

This sequence belongs to the KduI family. The cofactor is Zn(2+).

It catalyses the reaction 5-dehydro-4-deoxy-D-glucuronate = 3-deoxy-D-glycero-2,5-hexodiulosonate. It functions in the pathway glycan metabolism; pectin degradation; 2-dehydro-3-deoxy-D-gluconate from pectin: step 4/5. Its function is as follows. Catalyzes the isomerization of 5-dehydro-4-deoxy-D-glucuronate to 3-deoxy-D-glycero-2,5-hexodiulosonate. The chain is 4-deoxy-L-threo-5-hexosulose-uronate ketol-isomerase from Shigella flexneri.